Reading from the N-terminus, the 366-residue chain is Cytochrome c peroxidase, mitochondrial (366 aa).

A mitochondrion-targeting transit peptide spans 1-46; sequence MASAARSASRAFLRSTPTTSSFRPAVRAARFALPAQGFRAAGRRGY. His-127 serves as the catalytic Proton acceptor. His-250 is a heme b binding site. The active-site Tryptophan radical intermediate is the Trp-266.

Belongs to the peroxidase family. Cytochrome c peroxidase subfamily. In terms of assembly, forms a one-to-one complex with cytochrome c. It depends on heme b as a cofactor.

The protein localises to the mitochondrion matrix. Its subcellular location is the mitochondrion intermembrane space. The catalysed reaction is 2 Fe(II)-[cytochrome c] + H2O2 + 2 H(+) = 2 Fe(III)-[cytochrome c] + 2 H2O. Functionally, destroys radicals which are normally produced within the cells and which are toxic to biological systems. The sequence is that of Cytochrome c peroxidase, mitochondrial (ccp1) from Aspergillus fumigatus (strain ATCC MYA-4609 / CBS 101355 / FGSC A1100 / Af293) (Neosartorya fumigata).